A 135-amino-acid polypeptide reads, in one-letter code: DNA-directed RNA polymerase subunit omega (135 aa).

A disordered region spans residues 84-106 (IAGHSSHVSPSRSSRHTGLGKSF).

The protein belongs to the RNA polymerase subunit omega family. In terms of assembly, the RNAP catalytic core consists of 2 alpha, 1 beta, 1 beta' and 1 omega subunit. When a sigma factor is associated with the core the holoenzyme is formed, which can initiate transcription.

The catalysed reaction is RNA(n) + a ribonucleoside 5'-triphosphate = RNA(n+1) + diphosphate. Promotes RNA polymerase assembly. Latches the N- and C-terminal regions of the beta' subunit thereby facilitating its interaction with the beta and alpha subunits. The protein is DNA-directed RNA polymerase subunit omega of Anaplasma phagocytophilum (strain HZ).